A 53-amino-acid polypeptide reads, in one-letter code: UPF0391 membrane protein YPTS_0599 (53 aa).

2 helical membrane passes run 4 to 24 and 27 to 47; these read WGII…GGLA and AAWA…ISLF.

This sequence belongs to the UPF0391 family.

It is found in the cell membrane. The sequence is that of UPF0391 membrane protein YPTS_0599 from Yersinia pseudotuberculosis serotype IB (strain PB1/+).